Reading from the N-terminus, the 694-residue chain is Voltage-gated chloride channel TMC4 (694 aa).

Residues 1-21 are disordered; sequence MEAWGQSPACSSSRKARTGPS. Residues 1 to 150 lie on the Extracellular side of the membrane; that stretch reads MEAWGQSPAC…GTESYFSLLR (150 aa). Residues 151-171 form a helical membrane-spanning segment; the sequence is FLLFLNLVASVIEICMKLIPT. Residues 172–231 are Cytoplasmic-facing; sequence WLEGAPPGPPGPNISSPCGSYIPHTHGLVAFPTQLFNLLSGEGYLEWSPLFYGFYPPRSN. A helical transmembrane segment spans residues 232–252; sequence LAITYLCSVFAISVIYLLCIL. The Extracellular segment spans residues 253–330; sequence RRSVSGLKET…SQRAKVWSMR (78 aa). Residues 331–351 traverse the membrane as a helical segment; sequence ALLNVLVLALLGAAFYGIYWA. Over 352–376 the chain is Cytoplasmic; the sequence is TEYTLTLQETPLVRQTPLFKLLVDY. Residues 377–397 traverse the membrane as a helical segment; the sequence is LPSIFISLFNFVLPPVFKFIA. Residues 398–407 are Extracellular-facing; sequence SLEGYTQSRQ. The helical transmembrane segment at 408-428 threads the bilayer; it reads IVLILLRTVFLRLASLVFLLV. Over 429 to 465 the chain is Cytoplasmic; that stretch reads SLWSQITCGGNMEAEGCKACGYNYKEIPCWETRLGQE. A helical membrane pass occupies residues 466-486; it reads MYKLVLFDLLMGLLVTLLVQF. The Extracellular segment spans residues 487-513; sequence PRKILCGLCPGALGRLSGTLEFQVPDE. A helical transmembrane segment spans residues 514 to 534; the sequence is VLGLIYAQTVVWVGSFFCPLL. A topological domain (cytoplasmic) is located at residue P535. The chain crosses the membrane as a helical span at residues 536–556; the sequence is LINTAKFLILFCLKKITLFSI. Residues 557–574 are Extracellular-facing; sequence YSPASRTFRASTANFFFP. Residues 575-595 form a helical membrane-spanning segment; that stretch reads LVLLVGLAISAVPVLYSIFLI. The Cytoplasmic segment spans residues 596-635; sequence PPSKLCGPFRGKLSIWAQIPEAIESLPQTAQNFLYFLGTQ. Residues 636 to 656 traverse the membrane as a helical segment; that stretch reads AFTVPLLILSSILMMYTVALA. The Extracellular segment spans residues 657–694; the sequence is NCYGRLISELKRQIETEVQNKVFLAQRAVALSSRNGTS. N-linked (GlcNAc...) asparagine glycosylation is present at N691.

This sequence belongs to the TMC family. In terms of tissue distribution, expressed in taste bud cells of the posterior tongue. Ubiquitously expressed.

It localises to the membrane. The catalysed reaction is chloride(in) = chloride(out). Voltage-gated chloride channel involved in high-concentration salt taste sensation. Depolarization induced by high NaCl concentration may trigger the activation of TMC4-mediated chloride influx into taste bud cells, helping the return to resting potential. Also allows permeation of organic anions including gluconate, but their current amplitudes at positive potentials are less than that of chloride. Involved in pH and temperature-dependent modulation of salty taste. The chain is Voltage-gated chloride channel TMC4 from Mus musculus (Mouse).